A 228-amino-acid polypeptide reads, in one-letter code: MSNYPLHQACMENEFFKVQELLHSKPSLLLQKDQDGRIPLHWSVSFQAHEITSFLLSKMENVNLDDYPDDSGWTPFHIACSVGNLEVVKSLYDRPLKPDLNKITNQGVTCLHLAVGKKWFEVSQFLIENGASVRIKDKFNQIPLHRAASVGSLKLIELLCGLGKSAVNWQDKQGWTPLFHALAEGHGDAAVLLVEKYGAEYDLVDNKGAKAEDVALNEQVKKFFLNNV.

6 ANK repeats span residues 1-30 (MSNY…SLLL), 35-64 (DGRI…NVNL), 71-100 (SGWT…KPDL), 106-135 (QGVT…SVRI), 139-168 (FNQI…SAVN), and 173-203 (QGWT…EYDL).

As to quaternary structure, interacts with RPT3.

Its function is as follows. Acts as a chaperone during the assembly of the 26S proteasome, specifically of the 19S regulatory complex (RC) and appears to have an overlapping role with RPN14. The chain is Probable 26S proteasome regulatory subunit p28 (NAS6) from Saccharomyces cerevisiae (strain ATCC 204508 / S288c) (Baker's yeast).